A 376-amino-acid chain; its full sequence is MKVLTVFGTRPEAIKMAPLVHALAKDPFFEAKVCVTAQHREMLDQVLKLFSIVPDYDLNIMQPGQGLTEITCRILEGLKPILAEFKPDVVLVHGDTTTTLATSLAAFYQRIPVGHVEAGLRTGDLYSPWPEEANRTLTGHLAMYHFSPTETSRQNLLRENVADSRIFITGNTVIDALLWVRDQVMSSDKLRSELAANYPFIDPDKKMILVTGHRRESFGRGFEEICHALADIATTHQDIQIVYPVHLNPNVREPVNRILGHVKNVILIDPQEYLPFVWLMNHAWLILTDSGGIQEEAPSLGKPVLVMRDTTERPEAVTAGTVRLVGTDKQRIVEEVTRLLKDENEYQAMSRAHNPYGDGQACSRILEALKNNRISL.

Substrate-binding positions include Arg-10, Lys-15, Asp-95, Glu-117, His-213, Gln-271, Phe-276, 290–292 (SGG), Glu-296, and Arg-313.

It belongs to the UDP-N-acetylglucosamine 2-epimerase family. Homodimer.

The protein resides in the cytoplasm. It catalyses the reaction UDP-N-acetyl-alpha-D-glucosamine = UDP-N-acetyl-alpha-D-mannosamine. It functions in the pathway bacterial outer membrane biogenesis; enterobacterial common antigen biosynthesis. With respect to regulation, allosterically activated by its substrate, UDP-GlcNAc. Its function is as follows. Catalyzes the reversible epimerization at C-2 of UDP-N-acetylglucosamine (UDP-GlcNAc) and thereby provides bacteria with UDP-N-acetylmannosamine (UDP-ManNAc), the activated donor of ManNAc residues. Also involved in bacteriophage N4 adsorption. This is UDP-N-acetylglucosamine 2-epimerase from Escherichia coli (strain K12).